Here is a 418-residue protein sequence, read N- to C-terminus: Tyrosine--tRNA ligase (418 aa).

Tyr34 provides a ligand contact to L-tyrosine. The 'HIGH' region signature appears at 39-48 (PTADSLHLGH). L-tyrosine is bound by residues Tyr169 and Gln173. The short motif at 229 to 233 (KFGKS) is the 'KMSKS' region element. Lys232 is an ATP binding site. Residues 352 to 418 (NNIVELLVSS…GKKKYFVLTY (67 aa)) form the S4 RNA-binding domain.

It belongs to the class-I aminoacyl-tRNA synthetase family. TyrS type 1 subfamily. In terms of assembly, homodimer.

Its subcellular location is the cytoplasm. It carries out the reaction tRNA(Tyr) + L-tyrosine + ATP = L-tyrosyl-tRNA(Tyr) + AMP + diphosphate + H(+). Catalyzes the attachment of tyrosine to tRNA(Tyr) in a two-step reaction: tyrosine is first activated by ATP to form Tyr-AMP and then transferred to the acceptor end of tRNA(Tyr). This chain is Tyrosine--tRNA ligase, found in Streptococcus pneumoniae (strain 70585).